The sequence spans 217 residues: Ras-related protein Rab-19 (217 aa).

GTP contacts are provided by Ser-26, Val-28, Gly-29, Lys-30, Thr-31, Cys-32, Tyr-42, Glu-44, and Thr-49. A Mg(2+)-binding site is contributed by Thr-31. Residues 39–54 (SGVYMEAQQNTIGVDF) carry the Switch 1 motif. The Mg(2+) site is built by Thr-49 and Asp-72. The Switch 2 signature appears at 74–89 (AGQERFRTITQSYYRS). GTP is bound by residues Gly-75, Asn-130, Lys-131, Asp-133, Ser-161, Ala-162, and Lys-163. S-geranylgeranyl cysteine attachment occurs at residues Cys-215 and Cys-217. Cys-217 carries the post-translational modification Cysteine methyl ester.

This sequence belongs to the small GTPase superfamily. Rab family. It depends on Mg(2+) as a cofactor.

The protein resides in the cell membrane. It catalyses the reaction GTP + H2O = GDP + phosphate + H(+). Regulated by guanine nucleotide exchange factors (GEFs) which promote the exchange of bound GDP for free GTP. Regulated by GTPase activating proteins (GAPs) which increase the GTP hydrolysis activity. Inhibited by GDP dissociation inhibitors (GDIs). The small GTPases Rab are key regulators of intracellular membrane trafficking, from the formation of transport vesicles to their fusion with membranes. Rabs cycle between an inactive GDP-bound form and an active GTP-bound form that is able to recruit to membranes different set of downstream effectors directly responsible for vesicle formation, movement, tethering and fusion. This is Ras-related protein Rab-19 (RAB19) from Bos taurus (Bovine).